Reading from the N-terminus, the 63-residue chain is Large ribosomal subunit protein uL29 (63 aa).

Belongs to the universal ribosomal protein uL29 family.

This Pectobacterium atrosepticum (strain SCRI 1043 / ATCC BAA-672) (Erwinia carotovora subsp. atroseptica) protein is Large ribosomal subunit protein uL29.